The chain runs to 332 residues: Small ribosomal subunit protein uS2 (332 aa).

Belongs to the universal ribosomal protein uS2 family.

This Nitrobacter winogradskyi (strain ATCC 25391 / DSM 10237 / CIP 104748 / NCIMB 11846 / Nb-255) protein is Small ribosomal subunit protein uS2.